We begin with the raw amino-acid sequence, 124 residues long: PEP-dependent dihydroxyacetone kinase 1, phosphoryl donor subunit DhaM (124 aa).

The PTS EIIA type-4 domain maps to P4–K124. The Tele-phosphohistidine intermediate role is filled by H12.

Belongs to the PEP-utilizing enzyme family. Homodimer. The dihydroxyacetone kinase complex is composed of a homodimer of DhaM, a homodimer of DhaK and the subunit DhaL.

The protein localises to the cytoplasm. The catalysed reaction is dihydroxyacetone + phosphoenolpyruvate = dihydroxyacetone phosphate + pyruvate. Its function is as follows. Component of the dihydroxyacetone kinase complex, which is responsible for the phosphoenolpyruvate (PEP)-dependent phosphorylation of dihydroxyacetone. DhaM serves as the phosphoryl donor. Is phosphorylated by phosphoenolpyruvate in an EI- and HPr-dependent reaction, and a phosphorelay system on histidine residues finally leads to phosphoryl transfer to DhaL and dihydroxyacetone. The sequence is that of PEP-dependent dihydroxyacetone kinase 1, phosphoryl donor subunit DhaM from Listeria innocua serovar 6a (strain ATCC BAA-680 / CLIP 11262).